The primary structure comprises 270 residues: 3-methyl-2-oxobutanoate hydroxymethyltransferase (270 aa).

Asp-48 and Asp-87 together coordinate Mg(2+). Residues 48-49 (DS), Asp-87, and Lys-117 each bind 3-methyl-2-oxobutanoate. Glu-119 contacts Mg(2+). The Proton acceptor role is filled by Glu-186.

Belongs to the PanB family. Homodecamer; pentamer of dimers. Mg(2+) serves as cofactor.

The protein resides in the cytoplasm. It carries out the reaction 3-methyl-2-oxobutanoate + (6R)-5,10-methylene-5,6,7,8-tetrahydrofolate + H2O = 2-dehydropantoate + (6S)-5,6,7,8-tetrahydrofolate. It participates in cofactor biosynthesis; (R)-pantothenate biosynthesis; (R)-pantoate from 3-methyl-2-oxobutanoate: step 1/2. Its function is as follows. Catalyzes the reversible reaction in which hydroxymethyl group from 5,10-methylenetetrahydrofolate is transferred onto alpha-ketoisovalerate to form ketopantoate. This is 3-methyl-2-oxobutanoate hydroxymethyltransferase from Synechococcus sp. (strain RCC307).